Reading from the N-terminus, the 216-residue chain is Adenylate kinase (216 aa).

ATP is bound at residue glycine 10–threonine 15. The tract at residues serine 30–valine 59 is NMP. AMP-binding positions include threonine 31, arginine 36, alanine 57 to valine 59, glycine 85 to arginine 88, and glutamine 92. Residues glycine 126 to aspartate 163 are LID. Arginine 127 is an ATP binding site. Zn(2+) is bound by residues cysteine 130 and cysteine 133. Threonine 136–tyrosine 137 contacts ATP. Positions 150 and 153 each coordinate Zn(2+). AMP-binding residues include arginine 160 and arginine 171. An ATP-binding site is contributed by glutamine 199.

This sequence belongs to the adenylate kinase family. As to quaternary structure, monomer.

The protein resides in the cytoplasm. The catalysed reaction is AMP + ATP = 2 ADP. The protein operates within purine metabolism; AMP biosynthesis via salvage pathway; AMP from ADP: step 1/1. Functionally, catalyzes the reversible transfer of the terminal phosphate group between ATP and AMP. Plays an important role in cellular energy homeostasis and in adenine nucleotide metabolism. This chain is Adenylate kinase, found in Bacillus mycoides (strain KBAB4) (Bacillus weihenstephanensis).